The sequence spans 177 residues: Keratin-associated protein 1-1 (177 aa).

This sequence belongs to the KRTAP type 1 family. Interacts with hair keratins. In terms of tissue distribution, expressed in the middle/upper portions of the hair cortex, in the region termed the keratogenous zone.

In the hair cortex, hair keratin intermediate filaments are embedded in an interfilamentous matrix, consisting of hair keratin-associated proteins (KRTAP), which are essential for the formation of a rigid and resistant hair shaft through their extensive disulfide bond cross-linking with abundant cysteine residues of hair keratins. The matrix proteins include the high-sulfur and high-glycine-tyrosine keratins. The chain is Keratin-associated protein 1-1 (KRTAP1-1) from Homo sapiens (Human).